We begin with the raw amino-acid sequence, 118 residues long: Large ribosomal subunit protein bL20 (118 aa).

This sequence belongs to the bacterial ribosomal protein bL20 family.

In terms of biological role, binds directly to 23S ribosomal RNA and is necessary for the in vitro assembly process of the 50S ribosomal subunit. It is not involved in the protein synthesizing functions of that subunit. The polypeptide is Large ribosomal subunit protein bL20 (Caulobacter vibrioides (strain ATCC 19089 / CIP 103742 / CB 15) (Caulobacter crescentus)).